The sequence spans 466 residues: Argininosuccinate lyase (466 aa).

Belongs to the lyase 1 family. Argininosuccinate lyase subfamily.

The protein localises to the cytoplasm. The enzyme catalyses 2-(N(omega)-L-arginino)succinate = fumarate + L-arginine. The protein operates within amino-acid biosynthesis; L-arginine biosynthesis; L-arginine from L-ornithine and carbamoyl phosphate: step 3/3. This chain is Argininosuccinate lyase, found in Desulfovibrio desulfuricans (strain ATCC 27774 / DSM 6949 / MB).